The sequence spans 928 residues: 2-oxoglutarate dehydrogenase E1 component (928 aa).

The protein belongs to the alpha-ketoglutarate dehydrogenase family. In terms of assembly, homodimer. Part of the 2-oxoglutarate dehydrogenase (OGDH) complex composed of E1 (2-oxoglutarate dehydrogenase), E2 (dihydrolipoamide succinyltransferase) and E3 (dihydrolipoamide dehydrogenase); the complex contains multiple copies of the three enzymatic components (E1, E2 and E3). Thiamine diphosphate is required as a cofactor.

The enzyme catalyses N(6)-[(R)-lipoyl]-L-lysyl-[protein] + 2-oxoglutarate + H(+) = N(6)-[(R)-S(8)-succinyldihydrolipoyl]-L-lysyl-[protein] + CO2. Its function is as follows. E1 component of the 2-oxoglutarate dehydrogenase (OGDH) complex which catalyzes the decarboxylation of 2-oxoglutarate, the first step in the conversion of 2-oxoglutarate to succinyl-CoA and CO(2). The sequence is that of 2-oxoglutarate dehydrogenase E1 component (sucA) from Rickettsia conorii (strain ATCC VR-613 / Malish 7).